A 153-amino-acid polypeptide reads, in one-letter code: DNA gyrase inhibitor (153 aa).

This sequence belongs to the DNA gyrase inhibitor family. As to quaternary structure, interacts with DNA gyrase.

The protein resides in the cytoplasm. Inhibits the supercoiling activity of DNA gyrase. Acts by inhibiting DNA gyrase at an early step, prior to (or at the step of) binding of DNA by the gyrase. It protects cells against toxins that target DNA gyrase, by inhibiting activity of these toxins and reducing the formation of lethal double-strand breaks in the cell. In Pantoea sp. (strain At-9b), this protein is DNA gyrase inhibitor.